Reading from the N-terminus, the 449-residue chain is Required for meiotic nuclear division protein 1 homolog (449 aa).

Residues 1 to 16 (MPATLLRAVAGSHRVL) constitute a mitochondrion transit peptide.

The protein belongs to the RMD1/sif2 family. In terms of assembly, homooligomer.

It is found in the mitochondrion. Its function is as follows. Required for mitochondrial translation, possibly by coordinating the assembly or maintenance of the mitochondrial ribosome. This Pongo abelii (Sumatran orangutan) protein is Required for meiotic nuclear division protein 1 homolog (RMND1).